Here is a 78-residue protein sequence, read N- to C-terminus: uncharacterized protein (78 aa).

This is an uncharacterized protein from Helicobacter pylori (strain J99 / ATCC 700824) (Campylobacter pylori J99).